Consider the following 35-residue polypeptide: Small toxic polypeptide LdrD (35 aa).

The chain crosses the membrane as a helical span at residues 10–32; the sequence is FWHDLAAPVIAGILASMIVNWLN.

Belongs to the Ldr toxic peptide family.

The protein resides in the cell inner membrane. Its function is as follows. Toxic component of a type I toxin-antitoxin (TA) system. Overexpression causes rapid cell killing and nucleoid condensation of the host cell. Overexpression induces stress-response and a number of membrane protein genes. May inhibit ATP synthesis due to its insertion in the cell inner membrane. This chain is Small toxic polypeptide LdrD (ldrD), found in Escherichia coli (strain K12).